Here is a 976-residue protein sequence, read N- to C-terminus: Ubiquitin ligase-binding protein BUL1 (976 aa).

Positions 1 to 65 (MAKDLNDSGF…SPSLHSPKSW (65 aa)) are disordered. Positions 23–39 (SDFTANSSTTMNVNANT) are enriched in polar residues. A compositionally biased stretch (low complexity) spans 53 to 64 (SSRSPSLHSPKS). Phosphoserine is present on residues serine 58 and serine 70. Disordered stretches follow at residues 82–124 (LAHS…DGDI), 145–196 (PQGN…SSST), and 857–878 (SEDSISHTGNGSSSSPSSASLT). The PY-motif signature appears at 156–160 (FPPSY). Residues 163 to 176 (ANNSTATGAAGSSA) show a composition bias toward low complexity. Positions 177 to 196 (DLSHQSLSTDALGATRSSST) are enriched in polar residues. Over residues 862–878 (SHTGNGSSSSPSSASLT) the composition is skewed to low complexity.

Belongs to the BUL1 family. As to quaternary structure, component of the RSP5-BUL1/2 ubiquitin ligase complex composed of at least RSP5 and BUL1 or BUL2.

The protein resides in the cytoplasm. The protein operates within protein modification; protein ubiquitination. Its function is as follows. Component of a RSP5 ubiquitin ligase complex which specifies polyubiquitination and intracellular trafficking of the general amino acid permease GAP1 as well as other permeases such as PMA1. The RSP5-BUL1/2 complex is also necessary for the heat-shock element (HSE)-mediated gene expression, nitrogen starvation GLN3-dependent transcription and pressure-induced differential regulation of the 2 tryptophan permeases TAT1 and TAT2. In Saccharomyces cerevisiae (strain ATCC 204508 / S288c) (Baker's yeast), this protein is Ubiquitin ligase-binding protein BUL1 (BUL1).